A 75-amino-acid chain; its full sequence is MASWRMLCFVLLFTSILICHDARPLPSSLSSSNGSPAFVESVKQVVKEIMRRKQLLGTQYSTNRLSPSGPDPHHH.

The N-terminal stretch at 1-22 is a signal peptide; the sequence is MASWRMLCFVLLFTSILICHDA. Proline 67 and proline 70 each carry hydroxyproline. Proline 70 carries an O-linked (Ara...) hydroxyproline glycan.

Belongs to the CLV3/ESR signal peptide family. The O-glycosylation (arabinosylation) of the hydroxyproline Pro-70 enhances binding affinity of the CLE33p peptide for its receptor. As to expression, expressed in root vasculature.

The protein resides in the secreted. Its subcellular location is the extracellular space. Signaling peptide involved in the regulation of root colonization by arbuscular mycorrhizal (AM) fungi. Moves from root to shoot to function with the receptor kinase SUNN, in a signaling pathway that repress strigolactone biosynthetic genes and strigolactone content in the roots, and consequently reduces the promotion of further colonization by AM fungi. The chain is CLAVATA3/ESR (CLE)-related protein 33 from Medicago truncatula (Barrel medic).